The following is a 249-amino-acid chain: Expansin-A19 (249 aa).

The N-terminal stretch at 1–21 (MGNIFLQLLAVVALCIAPARS) is a signal peptide. Residues 41–154 (GGACGYGNLY…QQVKCWRYGG (114 aa)) enclose the Expansin-like EG45 domain. 2 N-linked (GlcNAc...) asparagine glycosylation sites follow: N116 and N216. Residues 164–243 (YFELVLVTNM…GWSFGQTFST (80 aa)) enclose the Expansin-like CBD domain.

This sequence belongs to the expansin family. Expansin A subfamily.

It localises to the secreted. It is found in the cell wall. The protein resides in the membrane. May cause loosening and extension of plant cell walls by disrupting non-covalent bonding between cellulose microfibrils and matrix glucans. No enzymatic activity has been found. May be required for rapid internodal elongation in deepwater rice during submergence. This chain is Expansin-A19 (EXPA19), found in Oryza sativa subsp. japonica (Rice).